The following is a 181-amino-acid chain: MERLHESLHEAPIIDKDGYEYLVHPISNGVPVLEPGLLREVVIDIMQQSDFNVDKIVAPEAMGIHLATALSLQTDVPLVVIRKRSYGLPGEVALHKSTGYSESEMYINDIEAGDRILIIDDLLSTGGTLAAICGALDDIGTEIIDIVVVIRKIGQSAMDELEHDVTSLVDITVEDGEVTIQ.

It belongs to the purine/pyrimidine phosphoribosyltransferase family. Archaeal HPRT subfamily.

In terms of biological role, may catalyze a purine salvage reaction, the substrate is unknown. This Haloquadratum walsbyi (strain DSM 16854 / JCM 12705 / C23) protein is HGPRTase-like protein 2.